Reading from the N-terminus, the 147-residue chain is Large ribosomal subunit protein bL9 (147 aa).

Belongs to the bacterial ribosomal protein bL9 family.

Binds to the 23S rRNA. This is Large ribosomal subunit protein bL9 from Sulfurovum sp. (strain NBC37-1).